A 337-amino-acid polypeptide reads, in one-letter code: Aspartate-semialdehyde dehydrogenase 2 (337 aa).

NADP(+) contacts are provided by residues 13–16 (TGAV) and 41–42 (RS). Arg101 contributes to the phosphate binding site. Cys132 serves as the catalytic Acyl-thioester intermediate. Gln159 contributes to the substrate binding site. NADP(+) is bound at residue 162 to 163 (SG). Lys216 contributes to the phosphate binding site. A substrate-binding site is contributed by Arg238. The Proton acceptor role is filled by His245. Position 316 (Asn316) interacts with NADP(+).

This sequence belongs to the aspartate-semialdehyde dehydrogenase family. Homodimer.

The enzyme catalyses L-aspartate 4-semialdehyde + phosphate + NADP(+) = 4-phospho-L-aspartate + NADPH + H(+). It functions in the pathway amino-acid biosynthesis; L-lysine biosynthesis via DAP pathway; (S)-tetrahydrodipicolinate from L-aspartate: step 2/4. Its pathway is amino-acid biosynthesis; L-methionine biosynthesis via de novo pathway; L-homoserine from L-aspartate: step 2/3. It participates in amino-acid biosynthesis; L-threonine biosynthesis; L-threonine from L-aspartate: step 2/5. Its function is as follows. Catalyzes the NADPH-dependent formation of L-aspartate-semialdehyde (L-ASA) by the reductive dephosphorylation of L-aspartyl-4-phosphate. The polypeptide is Aspartate-semialdehyde dehydrogenase 2 (asd2) (Vibrio cholerae serotype O1 (strain ATCC 39315 / El Tor Inaba N16961)).